A 344-amino-acid polypeptide reads, in one-letter code: Phosphoribosylformylglycinamidine cyclo-ligase (344 aa).

The protein belongs to the AIR synthase family.

Its subcellular location is the cytoplasm. The catalysed reaction is 2-formamido-N(1)-(5-O-phospho-beta-D-ribosyl)acetamidine + ATP = 5-amino-1-(5-phospho-beta-D-ribosyl)imidazole + ADP + phosphate + H(+). It participates in purine metabolism; IMP biosynthesis via de novo pathway; 5-amino-1-(5-phospho-D-ribosyl)imidazole from N(2)-formyl-N(1)-(5-phospho-D-ribosyl)glycinamide: step 2/2. The polypeptide is Phosphoribosylformylglycinamidine cyclo-ligase (Neisseria meningitidis serogroup B (strain ATCC BAA-335 / MC58)).